A 174-amino-acid polypeptide reads, in one-letter code: Shikimate kinase 2 (174 aa).

12–17 lines the ATP pocket; that stretch reads GCGKTT. 2 residues coordinate Mg(2+): threonine 16 and aspartate 32. Residues aspartate 34, arginine 58, and glycine 79 each contribute to the substrate site. Residues 112–126 form an LID domain region; the sequence is QAAPEEDLRPTLTGK. Position 120 (arginine 120) interacts with ATP. Residue arginine 139 coordinates substrate.

The protein belongs to the shikimate kinase family. AroL subfamily. In terms of assembly, monomer. Mg(2+) is required as a cofactor.

It is found in the cytoplasm. It catalyses the reaction shikimate + ATP = 3-phosphoshikimate + ADP + H(+). The protein operates within metabolic intermediate biosynthesis; chorismate biosynthesis; chorismate from D-erythrose 4-phosphate and phosphoenolpyruvate: step 5/7. Catalyzes the specific phosphorylation of the 3-hydroxyl group of shikimic acid using ATP as a cosubstrate. The polypeptide is Shikimate kinase 2 (Shigella dysenteriae serotype 1 (strain Sd197)).